The following is a 1242-amino-acid chain: DNA-directed RNA polymerase RPB2 homolog (1242 aa).

A C4-type zinc finger spans residues 1180 to 1201; it reads CRNCGEPAIYNASHPIYKCMNC.

Belongs to the RNA polymerase beta chain family. As to quaternary structure, part of the viral DNA-directed RNA polymerase that consists of 8 polII-like subunits (RPB1, RPB2, RPB3, RPB5, RPB6, RPB7, RPB9, RPB10), a capping enzyme and a termination factor.

The protein localises to the host cytoplasm. It is found in the virion. The enzyme catalyses RNA(n) + a ribonucleoside 5'-triphosphate = RNA(n+1) + diphosphate. Functionally, catalytic component of the DNA-directed RNA polymerase (RNAP) that catalyzes the transcription in the cytoplasm of viral DNA into RNA using the four ribonucleoside triphosphates as substrates. Forms the polymerase active center together with RPB1. Part of the core element with the central large cleft, the clamp element that moves to open and close the cleft and the jaws that are thought to grab the incoming DNA template. This is DNA-directed RNA polymerase RPB2 homolog from Ornithodoros (relapsing fever ticks).